A 463-amino-acid chain; its full sequence is ATP-dependent protease ATPase subunit HslU (463 aa).

ATP is bound by residues Val21, 63–68, Asp276, Glu341, and Arg413; that span reads GVGKTE.

Belongs to the ClpX chaperone family. HslU subfamily. As to quaternary structure, a double ring-shaped homohexamer of HslV is capped on each side by a ring-shaped HslU homohexamer. The assembly of the HslU/HslV complex is dependent on binding of ATP.

It is found in the cytoplasm. ATPase subunit of a proteasome-like degradation complex; this subunit has chaperone activity. The binding of ATP and its subsequent hydrolysis by HslU are essential for unfolding of protein substrates subsequently hydrolyzed by HslV. HslU recognizes the N-terminal part of its protein substrates and unfolds these before they are guided to HslV for hydrolysis. The chain is ATP-dependent protease ATPase subunit HslU from Thermotoga neapolitana (strain ATCC 49049 / DSM 4359 / NBRC 107923 / NS-E).